A 268-amino-acid polypeptide reads, in one-letter code: Energy-coupling factor transporter transmembrane protein EcfT (268 aa).

Helical transmembrane passes span Phe28–Val48, Leu63–Met83, Ile107–Met127, Leu152–Met172, and Ile248–Val268.

The protein belongs to the energy-coupling factor EcfT family. As to quaternary structure, forms a stable energy-coupling factor (ECF) transporter complex composed of 2 membrane-embedded substrate-binding proteins (S component), 2 ATP-binding proteins (A component) and 2 transmembrane proteins (T component). May be able to interact with more than 1 S component at a time.

It localises to the cell membrane. In terms of biological role, transmembrane (T) component of an energy-coupling factor (ECF) ABC-transporter complex. Unlike classic ABC transporters this ECF transporter provides the energy necessary to transport a number of different substrates. The protein is Energy-coupling factor transporter transmembrane protein EcfT of Staphylococcus aureus (strain 04-02981).